A 339-amino-acid chain; its full sequence is Anthranilate phosphoribosyltransferase (339 aa).

5-phospho-alpha-D-ribose 1-diphosphate-binding positions include glycine 81, 84–85 (GD), threonine 89, 91–94 (NIST), 109–117 (KHGNRSVSS), and serine 121. Glycine 81 lines the anthranilate pocket. Serine 93 is a Mg(2+) binding site. Asparagine 112 contributes to the anthranilate binding site. Position 165 (arginine 165) interacts with anthranilate. Mg(2+)-binding residues include aspartate 224 and glutamate 225.

Belongs to the anthranilate phosphoribosyltransferase family. In terms of assembly, homodimer. Mg(2+) serves as cofactor.

It carries out the reaction N-(5-phospho-beta-D-ribosyl)anthranilate + diphosphate = 5-phospho-alpha-D-ribose 1-diphosphate + anthranilate. Its pathway is amino-acid biosynthesis; L-tryptophan biosynthesis; L-tryptophan from chorismate: step 2/5. Catalyzes the transfer of the phosphoribosyl group of 5-phosphorylribose-1-pyrophosphate (PRPP) to anthranilate to yield N-(5'-phosphoribosyl)-anthranilate (PRA). The protein is Anthranilate phosphoribosyltransferase of Thermosynechococcus vestitus (strain NIES-2133 / IAM M-273 / BP-1).